A 375-amino-acid polypeptide reads, in one-letter code: D-alanine--D-alanine ligase (375 aa).

The ATP-grasp domain maps to 145 to 348 (KRLLRDADLE…YPALITRLIE (204 aa)). Residue 175-230 (ITYLGSSLFVKPANQGSSVGVSKVINRISFDQALALAFCFDDKVLVESAINGRELE) coordinates ATP. Mg(2+) is bound by residues Asp-302, Glu-315, and Asn-317.

Belongs to the D-alanine--D-alanine ligase family. Mg(2+) is required as a cofactor. Mn(2+) serves as cofactor.

It localises to the cytoplasm. It carries out the reaction 2 D-alanine + ATP = D-alanyl-D-alanine + ADP + phosphate + H(+). The protein operates within cell wall biogenesis; peptidoglycan biosynthesis. Cell wall formation. This is D-alanine--D-alanine ligase from Baumannia cicadellinicola subsp. Homalodisca coagulata.